A 294-amino-acid polypeptide reads, in one-letter code: Putative glucose-6-phosphate 1-epimerase (294 aa).

Residues Arg-74 and Arg-99 each coordinate substrate. His-164 is a catalytic residue. Asp-208 provides a ligand contact to substrate. Glu-267 is a catalytic residue.

Belongs to the glucose-6-phosphate 1-epimerase family. In terms of assembly, monomer in solution.

The catalysed reaction is alpha-D-glucose 6-phosphate = beta-D-glucose 6-phosphate. This chain is Putative glucose-6-phosphate 1-epimerase (yeaD), found in Escherichia coli (strain K12).